A 123-amino-acid polypeptide reads, in one-letter code: Large ribosomal subunit protein bL12 (123 aa).

It belongs to the bacterial ribosomal protein bL12 family. As to quaternary structure, homodimer. Part of the ribosomal stalk of the 50S ribosomal subunit. Forms a multimeric L10(L12)X complex, where L10 forms an elongated spine to which 2 to 4 L12 dimers bind in a sequential fashion. Binds GTP-bound translation factors.

Its function is as follows. Forms part of the ribosomal stalk which helps the ribosome interact with GTP-bound translation factors. Is thus essential for accurate translation. The polypeptide is Large ribosomal subunit protein bL12 (Borrelia turicatae (strain 91E135)).